Reading from the N-terminus, the 284-residue chain is Putative ABC transporter ATP-binding protein tll2439 (284 aa).

Residues 6 to 242 (LEFHQVGFRY…WPTFAPELGT (237 aa)) form the ABC transporter domain. An ATP-binding site is contributed by 40 to 47 (GLNGSGKS).

It belongs to the ABC transporter superfamily.

The protein localises to the cell inner membrane. Functionally, probably part of an ABC transporter complex. Responsible for energy coupling to the transport system. The polypeptide is Putative ABC transporter ATP-binding protein tll2439 (Thermosynechococcus vestitus (strain NIES-2133 / IAM M-273 / BP-1)).